Consider the following 220-residue polypeptide: UPF0758 protein ASA_4229 (220 aa).

Positions 95–220 constitute an MPN domain; sequence EQLQRGDALT…TVSFAERGWL (126 aa). Residues histidine 169, histidine 171, and aspartate 182 each coordinate Zn(2+). The short motif at 169–182 is the JAMM motif element; the sequence is HNHPSGVAEPSRAD.

The protein belongs to the UPF0758 family.

This chain is UPF0758 protein ASA_4229, found in Aeromonas salmonicida (strain A449).